The sequence spans 474 residues: tRNA-2-methylthio-N(6)-dimethylallyladenosine synthase (474 aa).

The MTTase N-terminal domain maps to 3–120 (KKLLIKTWGC…LPQMIKDSQS (118 aa)). [4Fe-4S] cluster is bound by residues C12, C49, C83, C157, C161, and C164. The 233-residue stretch at 143 to 375 (RADGVTAFVS…QQQINTQAMR (233 aa)) folds into the Radical SAM core domain. In terms of domain architecture, TRAM spans 378 to 441 (RQMLNTEQRI…TNSLRGELVR (64 aa)).

This sequence belongs to the methylthiotransferase family. MiaB subfamily. In terms of assembly, monomer. The cofactor is [4Fe-4S] cluster.

Its subcellular location is the cytoplasm. The catalysed reaction is N(6)-dimethylallyladenosine(37) in tRNA + (sulfur carrier)-SH + AH2 + 2 S-adenosyl-L-methionine = 2-methylsulfanyl-N(6)-dimethylallyladenosine(37) in tRNA + (sulfur carrier)-H + 5'-deoxyadenosine + L-methionine + A + S-adenosyl-L-homocysteine + 2 H(+). In terms of biological role, catalyzes the methylthiolation of N6-(dimethylallyl)adenosine (i(6)A), leading to the formation of 2-methylthio-N6-(dimethylallyl)adenosine (ms(2)i(6)A) at position 37 in tRNAs that read codons beginning with uridine. The protein is tRNA-2-methylthio-N(6)-dimethylallyladenosine synthase of Photobacterium profundum (strain SS9).